The primary structure comprises 218 residues: Thiamine-phosphate synthase (218 aa).

4-amino-2-methyl-5-(diphosphooxymethyl)pyrimidine is bound by residues 45–49 (QYREK) and N77. Positions 78 and 97 each coordinate Mg(2+). S116 contacts 4-amino-2-methyl-5-(diphosphooxymethyl)pyrimidine. Residue 142 to 144 (TKT) coordinates 2-[(2R,5Z)-2-carboxy-4-methylthiazol-5(2H)-ylidene]ethyl phosphate. A 4-amino-2-methyl-5-(diphosphooxymethyl)pyrimidine-binding site is contributed by K145. 2-[(2R,5Z)-2-carboxy-4-methylthiazol-5(2H)-ylidene]ethyl phosphate is bound by residues G173 and 193-194 (VT).

Belongs to the thiamine-phosphate synthase family. Requires Mg(2+) as cofactor.

It catalyses the reaction 2-[(2R,5Z)-2-carboxy-4-methylthiazol-5(2H)-ylidene]ethyl phosphate + 4-amino-2-methyl-5-(diphosphooxymethyl)pyrimidine + 2 H(+) = thiamine phosphate + CO2 + diphosphate. The catalysed reaction is 2-(2-carboxy-4-methylthiazol-5-yl)ethyl phosphate + 4-amino-2-methyl-5-(diphosphooxymethyl)pyrimidine + 2 H(+) = thiamine phosphate + CO2 + diphosphate. The enzyme catalyses 4-methyl-5-(2-phosphooxyethyl)-thiazole + 4-amino-2-methyl-5-(diphosphooxymethyl)pyrimidine + H(+) = thiamine phosphate + diphosphate. The protein operates within cofactor biosynthesis; thiamine diphosphate biosynthesis; thiamine phosphate from 4-amino-2-methyl-5-diphosphomethylpyrimidine and 4-methyl-5-(2-phosphoethyl)-thiazole: step 1/1. Condenses 4-methyl-5-(beta-hydroxyethyl)thiazole monophosphate (THZ-P) and 2-methyl-4-amino-5-hydroxymethyl pyrimidine pyrophosphate (HMP-PP) to form thiamine monophosphate (TMP). This Pelotomaculum thermopropionicum (strain DSM 13744 / JCM 10971 / SI) protein is Thiamine-phosphate synthase.